We begin with the raw amino-acid sequence, 366 residues long: Alanine racemase (366 aa).

K33 (proton acceptor; specific for D-alanine) is an active-site residue. At K33 the chain carries N6-(pyridoxal phosphate)lysine. R129 lines the substrate pocket. Y253 acts as the Proton acceptor; specific for L-alanine in catalysis. Position 301 (M301) interacts with substrate.

It belongs to the alanine racemase family. It depends on pyridoxal 5'-phosphate as a cofactor.

It catalyses the reaction L-alanine = D-alanine. The protein operates within amino-acid biosynthesis; D-alanine biosynthesis; D-alanine from L-alanine: step 1/1. Functionally, catalyzes the interconversion of L-alanine and D-alanine. May also act on other amino acids. In Xanthomonas oryzae pv. oryzae (strain KACC10331 / KXO85), this protein is Alanine racemase (alr).